The chain runs to 363 residues: Spermidine/putrescine import ATP-binding protein PotA (363 aa).

In terms of domain architecture, ABC transporter spans 4–234; the sequence is LELRNVIRRF…PANRFIADFI (231 aa). 36–43 serves as a coordination point for ATP; sequence GPSGCGKT.

Belongs to the ABC transporter superfamily. Spermidine/putrescine importer (TC 3.A.1.11.1) family. The complex is composed of two ATP-binding proteins (PotA), two transmembrane proteins (PotB and PotC) and a solute-binding protein (PotD).

The protein resides in the cell inner membrane. The catalysed reaction is ATP + H2O + polyamine-[polyamine-binding protein]Side 1 = ADP + phosphate + polyamineSide 2 + [polyamine-binding protein]Side 1.. Part of the ABC transporter complex PotABCD involved in spermidine/putrescine import. Responsible for energy coupling to the transport system. The protein is Spermidine/putrescine import ATP-binding protein PotA of Nitrosomonas eutropha (strain DSM 101675 / C91 / Nm57).